The primary structure comprises 386 residues: Glucose-1-phosphate adenylyltransferase (386 aa).

Alpha-D-glucose 1-phosphate is bound by residues Tyr100, Gly165, 180–181, and Ser191; that span reads EK.

This sequence belongs to the bacterial/plant glucose-1-phosphate adenylyltransferase family. As to quaternary structure, homotetramer.

It catalyses the reaction alpha-D-glucose 1-phosphate + ATP + H(+) = ADP-alpha-D-glucose + diphosphate. The protein operates within glycan biosynthesis; glycogen biosynthesis. Involved in the biosynthesis of ADP-glucose, a building block required for the elongation reactions to produce glycogen. Catalyzes the reaction between ATP and alpha-D-glucose 1-phosphate (G1P) to produce pyrophosphate and ADP-Glc. This chain is Glucose-1-phosphate adenylyltransferase, found in Clostridium beijerinckii (strain ATCC 51743 / NCIMB 8052) (Clostridium acetobutylicum).